A 107-amino-acid polypeptide reads, in one-letter code: Glutaredoxin 4 (107 aa).

Residues 4–106 (IDKIKQQINE…TLLKETATKH (103 aa)) form the Glutaredoxin domain. K21 serves as a coordination point for glutathione. C29 provides a ligand contact to [2Fe-2S] cluster. Glutathione contacts are provided by residues R58, F70, and 83–84 (CD).

Belongs to the glutaredoxin family. Monothiol subfamily. In terms of assembly, homodimer.

It is found in the cytoplasm. In terms of biological role, monothiol glutaredoxin involved in the biogenesis of iron-sulfur clusters. The chain is Glutaredoxin 4 (grxD) from Haemophilus ducreyi (strain 35000HP / ATCC 700724).